We begin with the raw amino-acid sequence, 181 residues long: Protein Syd (181 aa).

Belongs to the Syd family.

Its subcellular location is the cell inner membrane. Interacts with the SecY protein in vivo. May bind preferentially to an uncomplexed state of SecY, thus functioning either as a chelating agent for excess SecY in the cell or as a regulatory factor that negatively controls the translocase function. This Cronobacter sakazakii (strain ATCC BAA-894) (Enterobacter sakazakii) protein is Protein Syd.